Reading from the N-terminus, the 353-residue chain is UPF0283 membrane protein YcjF (353 aa).

The span at 1–19 shows a compositional bias: basic and acidic residues; sequence MSEPLKPRIDFAEPLKEEP. The segment at 1 to 35 is disordered; sequence MSEPLKPRIDFAEPLKEEPTSAFKAQQTFSEAESR. Residues 1 to 69 lie on the Periplasmic side of the membrane; that stretch reads MSEPLKPRID…LRPKRSLWRK (69 aa). The chain crosses the membrane as a helical span at residues 70-90; it reads MVMGGLALFGASVVGQGVQWT. The Cytoplasmic portion of the chain corresponds to 91 to 99; that stretch reads MNAWQTQDW. A helical transmembrane segment spans residues 100 to 120; the sequence is VALGGCAAGALIVGAGVGSVV. Over 121–212 the chain is Periplasmic; sequence TEWRRLWRLR…ARREISRFAA (92 aa). Residues 213-233 form a helical membrane-spanning segment; the sequence is ESTLMIAVSPLALVDMAFIAW. The Cytoplasmic segment spans residues 234–353; the sequence is RNLRLINRIA…LQKSKSSPEK (120 aa).

It belongs to the UPF0283 family.

It is found in the cell inner membrane. The protein is UPF0283 membrane protein YcjF (ycjF) of Salmonella typhimurium (strain LT2 / SGSC1412 / ATCC 700720).